A 431-amino-acid chain; its full sequence is O-methyltransferase xanE (431 aa).

D283 provides a ligand contact to S-adenosyl-L-methionine. The Proton acceptor role is filled by H330.

The protein belongs to the class I-like SAM-binding methyltransferase superfamily. Cation-independent O-methyltransferase family.

The protein operates within secondary metabolite biosynthesis. Functionally, O-methyltransferase; part of the gene cluster that mediates the biosynthesis of the isocyanide xanthocillin and its derivatives. The first step of the pathway consists in the conversion of tyrosine into a vinyl-isonitrile intermediate by the isocyanide synthase xanB. Subsequent oxidative dimerization of this intermediate to form xanthocillin may involve the cytochrome P450 monooxygenase xanG, whose expression is coregulated with that of XanB. Xanthocillin can be further modified by the isonitrile hydratase-like protein xanA which introduces N-formyl groups and the methyltransferase xanE which introduces methyl groups, leading to the production of several derivatives including fumiformamide. Finally, fumiformamide can be subject to both oxidative and reductive cyclization to yield melanocins E and F, respectively. This chain is O-methyltransferase xanE, found in Aspergillus fumigatus (strain ATCC MYA-4609 / CBS 101355 / FGSC A1100 / Af293) (Neosartorya fumigata).